Consider the following 1060-residue polypeptide: Carbamoyl phosphate synthase large chain (1060 aa).

The segment at 1-401 (MPKRTDIRKI…SLLKAVRSLE (401 aa)) is carboxyphosphate synthetic domain. ATP-binding residues include arginine 129, arginine 169, glycine 175, glycine 176, glutamine 208, isoleucine 210, glutamate 215, glycine 241, isoleucine 242, histidine 243, glutamine 284, and glutamate 298. Residues 133-327 (KNLMNQLNEP…IAKMAAKIAV (195 aa)) enclose the ATP-grasp 1 domain. Glutamine 284, glutamate 298, and asparagine 300 together coordinate Mg(2+). Mn(2+) contacts are provided by glutamine 284, glutamate 298, and asparagine 300. An oligomerization domain region spans residues 402-546 (IGTAHLELDG…YTTYEQENES (145 aa)). The tract at residues 547 to 929 (LVSAKPSILV…ALYKAFEASG (383 aa)) is carbamoyl phosphate synthetic domain. One can recognise an ATP-grasp 2 domain in the interval 671 to 861 (DQLIQELNIP…MAQLATQLIL (191 aa)). Positions 707, 746, 748, 752, 777, 778, 779, 780, 820, and 832 each coordinate ATP. 3 residues coordinate Mg(2+): glutamine 820, glutamate 832, and asparagine 834. Glutamine 820, glutamate 832, and asparagine 834 together coordinate Mn(2+). One can recognise an MGS-like domain in the interval 930 to 1060 (MHLPSHGNVL…ESQSLLTKPL (131 aa)). An allosteric domain region spans residues 930-1060 (MHLPSHGNVL…ESQSLLTKPL (131 aa)).

It belongs to the CarB family. Composed of two chains; the small (or glutamine) chain promotes the hydrolysis of glutamine to ammonia, which is used by the large (or ammonia) chain to synthesize carbamoyl phosphate. Tetramer of heterodimers (alpha,beta)4. Mg(2+) is required as a cofactor. Requires Mn(2+) as cofactor.

The catalysed reaction is hydrogencarbonate + L-glutamine + 2 ATP + H2O = carbamoyl phosphate + L-glutamate + 2 ADP + phosphate + 2 H(+). It catalyses the reaction hydrogencarbonate + NH4(+) + 2 ATP = carbamoyl phosphate + 2 ADP + phosphate + 2 H(+). Its pathway is amino-acid biosynthesis; L-arginine biosynthesis; carbamoyl phosphate from bicarbonate: step 1/1. It participates in pyrimidine metabolism; UMP biosynthesis via de novo pathway; (S)-dihydroorotate from bicarbonate: step 1/3. Its function is as follows. Large subunit of the glutamine-dependent carbamoyl phosphate synthetase (CPSase). CPSase catalyzes the formation of carbamoyl phosphate from the ammonia moiety of glutamine, carbonate, and phosphate donated by ATP, constituting the first step of 2 biosynthetic pathways, one leading to arginine and/or urea and the other to pyrimidine nucleotides. The large subunit (synthetase) binds the substrates ammonia (free or transferred from glutamine from the small subunit), hydrogencarbonate and ATP and carries out an ATP-coupled ligase reaction, activating hydrogencarbonate by forming carboxy phosphate which reacts with ammonia to form carbamoyl phosphate. The chain is Carbamoyl phosphate synthase large chain from Latilactobacillus sakei subsp. sakei (strain 23K) (Lactobacillus sakei subsp. sakei).